An 876-amino-acid chain; its full sequence is MNMEPKYNPREVEAGRYEEWVKNDYFKPSEDKSKETYTIVIPPPNVTGKLHLGHAWDTTLQDIITRMKRMQGYDTLYLPGMDHAGIATQAKVDAKLKEQGISRHDIGREKFLEHAWSWKEEYASFIRQQWAKLGLGLDYSRERFTLDDGLSKAVRKVFVDLYNKGIIYRGERIINWDPEARTALSDIEVIHEDVQGHFYHFKYPYADGDGYIEIATTRPETMLGDTAIVVNPNDDRYKDVIGKKVILPIVGRELPILADEYVDIDFGSGAMKVTPAHDPNDFEIGQRHSLENIIVMDENGKMNDKADKYAGLDRFECRKQLVEDLKAQDLVIKIEEHVHSVGHSERSGAVVEPYLSTQWFVKMKPLAQRSLDNQKTDDRIDFYPPRFENTFNRWMEEIRDWTISRQLWWGHQIPAWYHKETGEIYVGEEAPKDIDNWVQDEDVLDTWFSSALWPFSTLGWPNIDADDFKRYYPTNALVTGYDIIFFWVARMIFQGLEFTDRRPFNDVLLHGLVRAEDGRKMSKSLGNGVDPMDVIEEYGADSLRYFLATGSSPGHDLRYSTEKVESVWNFINKIWNGARFSLMNIGDEFKFEDIDLTGNLSLADKWILTRLNETIETVTNLSEKYEFGEVGRALYNFIWDEFCDWYIEMSKIPMNGEDEAQKQTTRSVLSYTLDQIMRMLHPFMPFVTEKIWQSLPHEGETIVKASWPTVREELVFEESKQTMQQLVEIIKSVRQSRVEVNTPLSKAIPIYIQAKDENIKATLIENEDYIHKFCNPSDLTIDTHIDIPEKAMTAVVIAGKVVLPLEGLIDMDKEIARLEKELDKLQKELDRVDKKLSNENFVNKAPEKVINEEKEKQQRYQEKYDGVKNRIEQLKA.

The 'HIGH' region motif lies at 44–54; that stretch reads PNVTGKLHLGH. Residues 520-524 carry the 'KMSKS' region motif; sequence KMSKS. Lysine 523 contacts ATP. Residues 805-876 adopt a coiled-coil conformation; sequence LEGLIDMDKE…VKNRIEQLKA (72 aa).

Belongs to the class-I aminoacyl-tRNA synthetase family. ValS type 1 subfamily. As to quaternary structure, monomer.

Its subcellular location is the cytoplasm. The enzyme catalyses tRNA(Val) + L-valine + ATP = L-valyl-tRNA(Val) + AMP + diphosphate. In terms of biological role, catalyzes the attachment of valine to tRNA(Val). As ValRS can inadvertently accommodate and process structurally similar amino acids such as threonine, to avoid such errors, it has a 'posttransfer' editing activity that hydrolyzes mischarged Thr-tRNA(Val) in a tRNA-dependent manner. The polypeptide is Valine--tRNA ligase (Staphylococcus haemolyticus (strain JCSC1435)).